A 348-amino-acid chain; its full sequence is Anthranilate phosphoribosyltransferase (348 aa).

Residues Gly-80, Gly-83–Asp-84, Thr-88, Asn-90–Thr-93, Lys-108–Ser-116, and Ser-120 each bind 5-phospho-alpha-D-ribose 1-diphosphate. Gly-80 is an anthranilate binding site. Ser-92 contacts Mg(2+). Asn-111 provides a ligand contact to anthranilate. Residue Arg-166 participates in anthranilate binding. 2 residues coordinate Mg(2+): Asp-224 and Glu-225.

Belongs to the anthranilate phosphoribosyltransferase family. As to quaternary structure, homodimer. Mg(2+) serves as cofactor.

It carries out the reaction N-(5-phospho-beta-D-ribosyl)anthranilate + diphosphate = 5-phospho-alpha-D-ribose 1-diphosphate + anthranilate. It functions in the pathway amino-acid biosynthesis; L-tryptophan biosynthesis; L-tryptophan from chorismate: step 2/5. Functionally, catalyzes the transfer of the phosphoribosyl group of 5-phosphorylribose-1-pyrophosphate (PRPP) to anthranilate to yield N-(5'-phosphoribosyl)-anthranilate (PRA). The polypeptide is Anthranilate phosphoribosyltransferase (Sorangium cellulosum (strain So ce56) (Polyangium cellulosum (strain So ce56))).